The chain runs to 237 residues: MVTRGKKYQDAIKLLDQSLAYAPAEAIDVAKKMAAAKFDETVEMHLKMGLDPKNATQQLRGVAVLPHGLGKTVRVLVFAQGEAEKAAQAAGADVYGGDELIKKVEAGFLDFDVAISTPDMMSKVGKLGKVLGRRGLMPNPKSGTVVPAEDFKQVIEEARKGRVEFKLDRSGIVHIILGKASFEGQALLENMTSVVDAIIRSKPTGAKGQYIKSAYLATTMGPGVKMDLRAVSAMGGA.

The protein belongs to the universal ribosomal protein uL1 family. As to quaternary structure, part of the 50S ribosomal subunit.

Its function is as follows. Binds directly to 23S rRNA. The L1 stalk is quite mobile in the ribosome, and is involved in E site tRNA release. In terms of biological role, protein L1 is also a translational repressor protein, it controls the translation of the L11 operon by binding to its mRNA. The chain is Large ribosomal subunit protein uL1 from Dehalococcoides mccartyi (strain ATCC BAA-2266 / KCTC 15142 / 195) (Dehalococcoides ethenogenes (strain 195)).